Reading from the N-terminus, the 327-residue chain is MAMTTDVKDELSRLVVKSVSARRAEVTSLLRFAGGLHIVGGRVVVEAELDLGSIARRLRKEIFELYGYTAVVHVLSASGIRKSTRYVLRVANDGEALARQTGLLDMRGRPVRGLPAQVVGGSIDDAEAAWRGAFLAHGSLTEPGRSSALEVSCPGPEAALALVGAARRLGVGAKAREVRGADRVVVRDGEAIGALLTRMGAQDTRLVWEERRLRREVRATANRLANFDDANLRRSARAAVAAAARVERALEILGDTVPEHLASAGKLRVEHRQASLEELGRLADPPMTKDAVAGRIRRLLSMADRKAKVDGIPDTESVVTPDLLEDA.

Residues 275 to 308 constitute a DNA-binding region (H-T-H motif); sequence SLEELGRLADPPMTKDAVAGRIRRLLSMADRKAK.

The protein belongs to the WhiA family.

Functionally, involved in cell division and chromosome segregation. The chain is Probable cell division protein WhiA from Mycobacterium bovis (strain ATCC BAA-935 / AF2122/97).